We begin with the raw amino-acid sequence, 386 residues long: Succinate--CoA ligase [ADP-forming] subunit beta (386 aa).

Residues lysine 9 to arginine 244 form the ATP-grasp domain. ATP contacts are provided by residues lysine 46, glycine 53–glycine 55, glutamate 99, cysteine 102, and glutamate 107. Mg(2+)-binding residues include asparagine 199 and aspartate 213. Substrate-binding positions include asparagine 264 and glycine 321–methionine 323.

The protein belongs to the succinate/malate CoA ligase beta subunit family. Heterotetramer of two alpha and two beta subunits. Mg(2+) is required as a cofactor.

It catalyses the reaction succinate + ATP + CoA = succinyl-CoA + ADP + phosphate. It carries out the reaction GTP + succinate + CoA = succinyl-CoA + GDP + phosphate. The protein operates within carbohydrate metabolism; tricarboxylic acid cycle; succinate from succinyl-CoA (ligase route): step 1/1. Functionally, succinyl-CoA synthetase functions in the citric acid cycle (TCA), coupling the hydrolysis of succinyl-CoA to the synthesis of either ATP or GTP and thus represents the only step of substrate-level phosphorylation in the TCA. The beta subunit provides nucleotide specificity of the enzyme and binds the substrate succinate, while the binding sites for coenzyme A and phosphate are found in the alpha subunit. This is Succinate--CoA ligase [ADP-forming] subunit beta from Rickettsia felis (strain ATCC VR-1525 / URRWXCal2) (Rickettsia azadi).